The primary structure comprises 241 residues: 3-oxoacyl-[acyl-carrier-protein] reductase FabG (241 aa).

NADP(+)-binding positions include 13–16 (GASG), serine 38, 57–58 (EV), and asparagine 83. Serine 135 lines the substrate pocket. Catalysis depends on tyrosine 148, which acts as the Proton acceptor. Residues 148–152 (YCASK) and isoleucine 181 each bind NADP(+).

This sequence belongs to the short-chain dehydrogenases/reductases (SDR) family. As to quaternary structure, homotetramer.

The catalysed reaction is a (3R)-hydroxyacyl-[ACP] + NADP(+) = a 3-oxoacyl-[ACP] + NADPH + H(+). It functions in the pathway lipid metabolism; fatty acid biosynthesis. Its function is as follows. Catalyzes the NADPH-dependent reduction of beta-ketoacyl-ACP substrates to beta-hydroxyacyl-ACP products, the first reductive step in the elongation cycle of fatty acid biosynthesis. This chain is 3-oxoacyl-[acyl-carrier-protein] reductase FabG (fabG), found in Rickettsia conorii (strain ATCC VR-613 / Malish 7).